A 142-amino-acid chain; its full sequence is Large ribosomal subunit protein uL11 (142 aa).

The protein belongs to the universal ribosomal protein uL11 family. In terms of assembly, part of the ribosomal stalk of the 50S ribosomal subunit. Interacts with L10 and the large rRNA to form the base of the stalk. L10 forms an elongated spine to which L12 dimers bind in a sequential fashion forming a multimeric L10(L12)X complex. Post-translationally, one or more lysine residues are methylated.

Forms part of the ribosomal stalk which helps the ribosome interact with GTP-bound translation factors. The sequence is that of Large ribosomal subunit protein uL11 from Photobacterium profundum (strain SS9).